The sequence spans 264 residues: 5'-nucleotidase SurE (264 aa).

A divalent metal cation-binding residues include aspartate 8, aspartate 9, serine 41, and asparagine 98.

This sequence belongs to the SurE nucleotidase family. Requires a divalent metal cation as cofactor.

Its subcellular location is the cytoplasm. The enzyme catalyses a ribonucleoside 5'-phosphate + H2O = a ribonucleoside + phosphate. Nucleotidase that shows phosphatase activity on nucleoside 5'-monophosphates. The sequence is that of 5'-nucleotidase SurE from Carboxydothermus hydrogenoformans (strain ATCC BAA-161 / DSM 6008 / Z-2901).